The following is an 835-amino-acid chain: Translation initiation factor IF-2 (835 aa).

The interval 1–240 (MSDSDGKKTL…RKQERARQKA (240 aa)) is disordered. Over residues 50-59 (AGKGGAGGVA) the composition is skewed to gly residues. The span at 86–152 (KAREAEEAAQ…AEAAKKRAAA (67 aa)) shows a compositional bias: basic and acidic residues. Positions 153–169 (DKAAAAAPKSDAGVAPA) are enriched in low complexity. Residues 184 to 205 (RKAEREREERGRGAKGRNDGGR) show a composition bias toward basic and acidic residues. The tr-type G domain maps to 332 to 500 (PRPPVITIMG…AIALQAEILE (169 aa)). Residues 341 to 348 (GHVDHGKT) form a G1 region. 341-348 (GHVDHGKT) contacts GTP. The interval 366 to 370 (GITQH) is G2. The interval 388-391 (DTPG) is G3. Residues 388–392 (DTPGH) and 442–445 (NKID) contribute to the GTP site. The G4 stretch occupies residues 442–445 (NKID). The tract at residues 478–480 (SAH) is G5.

Belongs to the TRAFAC class translation factor GTPase superfamily. Classic translation factor GTPase family. IF-2 subfamily.

The protein resides in the cytoplasm. Functionally, one of the essential components for the initiation of protein synthesis. Protects formylmethionyl-tRNA from spontaneous hydrolysis and promotes its binding to the 30S ribosomal subunits. Also involved in the hydrolysis of GTP during the formation of the 70S ribosomal complex. The polypeptide is Translation initiation factor IF-2 (Ruegeria sp. (strain TM1040) (Silicibacter sp.)).